The sequence spans 392 residues: Chalcone synthase-like protein 1 (392 aa).

Cys-166 is a catalytic residue.

This sequence belongs to the thiolase-like superfamily. Chalcone/stilbene synthases family. In terms of tissue distribution, expressed at the same level in leaves and in glandular trichomes.

It localises to the cytoplasm. Functionally, chalcone synthase that may use malonyl-CoA and hexanoyl-CoA as substrates but without producing olivetol or olivetolic acid. The protein is Chalcone synthase-like protein 1 (CAN383) of Cannabis sativa (Hemp).